The following is an 81-amino-acid chain: Cytotoxin 3 (81 aa).

Residues 1 to 21 form the signal peptide; sequence MKTLLLTLVVVTIVCLDLGYT. Cystine bridges form between Cys-24–Cys-42, Cys-35–Cys-59, Cys-63–Cys-74, and Cys-75–Cys-80.

The protein belongs to the three-finger toxin family. Short-chain subfamily. Type IA cytotoxin sub-subfamily. In terms of assembly, monomer in solution; Homodimer and oligomer in the presence of negatively charged lipids forming a pore with a size ranging between 20 and 30 Angstroms. Interacts with Kv channel-interacting protein 1 (KCNIP1) in a calcium-independent manner. Expressed by the venom gland.

The protein resides in the secreted. Its subcellular location is the target cell membrane. Its function is as follows. Basic protein that binds to cell membrane and depolarizes cardiomyocytes. This cytotoxin also possesses lytic activity on many other cells, including red blood cells. Interaction with sulfatides in the cell membrane induces pore formation and cell internalization. Cytotoxicity is due to pore formation, and to another mechanism independent of membrane-damaging activity. When internalized, it targets the mitochondrial membrane and induces mitochondrial swelling and fragmentation. It inhibits protein kinases C. It binds to the integrin alpha-V/beta-3 (ITGAV/ITGB3) with a moderate affinity. It also binds with high affinity to heparin. The chain is Cytotoxin 3 from Naja atra (Chinese cobra).